The chain runs to 260 residues: Snake venom serine protease homolog (260 aa).

Residues 1–18 (MVLIRVLANLLILQLSYA) form the signal peptide. Residues 19-24 (QKASEL) constitute a propeptide that is removed on maturation. Positions 25–251 (IIGGDECNIN…YTEWIRSIIA (227 aa)) constitute a Peptidase S1 domain. 6 disulfides stabilise this stretch: Cys31–Cys165, Cys52–Cys68, Cys100–Cys258, Cys144–Cys212, Cys176–Cys191, and Cys202–Cys227. A glycan (N-linked (GlcNAc...) asparagine) is linked at Asn83.

The protein belongs to the peptidase S1 family. Snake venom subfamily. In terms of tissue distribution, expressed by the venom gland.

The protein resides in the secreted. Its function is as follows. Snake venom serine protease homolog that may act in the hemostasis system of the prey. The protein is Snake venom serine protease homolog of Bothrops jararacussu (Jararacussu).